The sequence spans 353 residues: Holliday junction branch migration complex subunit RuvB (353 aa).

The large ATPase domain (RuvB-L) stretch occupies residues 4-190 (HYIRFKIMTN…FGIPMRLNFY (187 aa)). Residues Ile29, Arg30, Gly71, Lys74, Thr75, Thr76, 137–139 (EDF), Arg180, Tyr190, and Arg227 each bind ATP. Position 75 (Thr75) interacts with Mg(2+). Positions 191–261 (NTEELKKVLN…ISDFGLNRLE (71 aa)) are small ATPAse domain (RuvB-S). Residues 264-353 (RIGLDSNDYR…HQFNIFNEHE (90 aa)) are head domain (RuvB-H). DNA is bound by residues Arg300, Arg319, and Arg324.

The protein belongs to the RuvB family. Homohexamer. Forms an RuvA(8)-RuvB(12)-Holliday junction (HJ) complex. HJ DNA is sandwiched between 2 RuvA tetramers; dsDNA enters through RuvA and exits via RuvB. An RuvB hexamer assembles on each DNA strand where it exits the tetramer. Each RuvB hexamer is contacted by two RuvA subunits (via domain III) on 2 adjacent RuvB subunits; this complex drives branch migration. In the full resolvosome a probable DNA-RuvA(4)-RuvB(12)-RuvC(2) complex forms which resolves the HJ.

The protein localises to the cytoplasm. It catalyses the reaction ATP + H2O = ADP + phosphate + H(+). In terms of biological role, the RuvA-RuvB-RuvC complex processes Holliday junction (HJ) DNA during genetic recombination and DNA repair, while the RuvA-RuvB complex plays an important role in the rescue of blocked DNA replication forks via replication fork reversal (RFR). RuvA specifically binds to HJ cruciform DNA, conferring on it an open structure. The RuvB hexamer acts as an ATP-dependent pump, pulling dsDNA into and through the RuvAB complex. RuvB forms 2 homohexamers on either side of HJ DNA bound by 1 or 2 RuvA tetramers; 4 subunits per hexamer contact DNA at a time. Coordinated motions by a converter formed by DNA-disengaged RuvB subunits stimulates ATP hydrolysis and nucleotide exchange. Immobilization of the converter enables RuvB to convert the ATP-contained energy into a lever motion, pulling 2 nucleotides of DNA out of the RuvA tetramer per ATP hydrolyzed, thus driving DNA branch migration. The RuvB motors rotate together with the DNA substrate, which together with the progressing nucleotide cycle form the mechanistic basis for DNA recombination by continuous HJ branch migration. Branch migration allows RuvC to scan DNA until it finds its consensus sequence, where it cleaves and resolves cruciform DNA. The protein is Holliday junction branch migration complex subunit RuvB of Rickettsia massiliae (strain Mtu5).